The chain runs to 502 residues: CDP-diacylglycerol--glycerol-3-phosphate 3-phosphatidyltransferase (502 aa).

Residue 58–65 (STLYIGKE) coordinates ATP. PLD phosphodiesterase domains are found at residues 143–169 (GWGL…SRDY) and 410–443 (KGNT…TSRS). Active-site residues include His-148, Lys-150, and Asp-155.

The protein belongs to the CDP-alcohol phosphatidyltransferase class-II family.

Its subcellular location is the mitochondrion. It carries out the reaction a CDP-1,2-diacyl-sn-glycerol + sn-glycerol 3-phosphate = a 1,2-diacyl-sn-glycero-3-phospho-(1'-sn-glycero-3'-phosphate) + CMP + H(+). It participates in phospholipid metabolism; phosphatidylglycerol biosynthesis; phosphatidylglycerol from CDP-diacylglycerol: step 1/2. Its function is as follows. Functions in the biosynthesis of the anionic phospholipids phosphatidylglycerol and cardiolipin. In Schizosaccharomyces pombe (strain 972 / ATCC 24843) (Fission yeast), this protein is CDP-diacylglycerol--glycerol-3-phosphate 3-phosphatidyltransferase (pgs1).